The following is a 176-amino-acid chain: MRVLGVDPGLTRCGVGVVEGVAGRPLTMRGVGVVRTPADAELGLRLVAIEQGIEQWLDEYRPECVAVERVFSQHNVRTVMGTAQASAVAMLCAARRGIPVALHTPSEVKAAVTGSGRADKAQVGAMVTRLLRLDAPPKPADAADALALAICHIWRAPAQNRLQQAVALHASKGRTA.

Catalysis depends on residues aspartate 7, glutamate 68, and aspartate 141. 3 residues coordinate Mg(2+): aspartate 7, glutamate 68, and aspartate 141.

The protein belongs to the RuvC family. As to quaternary structure, homodimer which binds Holliday junction (HJ) DNA. The HJ becomes 2-fold symmetrical on binding to RuvC with unstacked arms; it has a different conformation from HJ DNA in complex with RuvA. In the full resolvosome a probable DNA-RuvA(4)-RuvB(12)-RuvC(2) complex forms which resolves the HJ. Requires Mg(2+) as cofactor.

The protein localises to the cytoplasm. The catalysed reaction is Endonucleolytic cleavage at a junction such as a reciprocal single-stranded crossover between two homologous DNA duplexes (Holliday junction).. Functionally, the RuvA-RuvB-RuvC complex processes Holliday junction (HJ) DNA during genetic recombination and DNA repair. Endonuclease that resolves HJ intermediates. Cleaves cruciform DNA by making single-stranded nicks across the HJ at symmetrical positions within the homologous arms, yielding a 5'-phosphate and a 3'-hydroxyl group; requires a central core of homology in the junction. The consensus cleavage sequence is 5'-(A/T)TT(C/G)-3'. Cleavage occurs on the 3'-side of the TT dinucleotide at the point of strand exchange. HJ branch migration catalyzed by RuvA-RuvB allows RuvC to scan DNA until it finds its consensus sequence, where it cleaves and resolves the cruciform DNA. In Streptomyces avermitilis (strain ATCC 31267 / DSM 46492 / JCM 5070 / NBRC 14893 / NCIMB 12804 / NRRL 8165 / MA-4680), this protein is Crossover junction endodeoxyribonuclease RuvC.